A 191-amino-acid polypeptide reads, in one-letter code: Putative glutathione-dependent formaldehyde-activating enzyme (191 aa).

In terms of domain architecture, CENP-V/GFA spans F20–D166. 7 residues coordinate Zn(2+): C27, C29, C48, C50, C53, C95, and C98.

Belongs to the Gfa family. Zn(2+) is required as a cofactor.

It carries out the reaction S-(hydroxymethyl)glutathione = glutathione + formaldehyde. The protein operates within one-carbon metabolism; formaldehyde degradation; formate from formaldehyde (glutathione route): step 1/3. In terms of biological role, catalyzes the condensation of formaldehyde and glutathione to S-hydroxymethylglutathione. The polypeptide is Putative glutathione-dependent formaldehyde-activating enzyme (Penicillium rubens (strain ATCC 28089 / DSM 1075 / NRRL 1951 / Wisconsin 54-1255) (Penicillium chrysogenum)).